Consider the following 149-residue polypeptide: Ribonuclease pancreatic (149 aa).

The signal sequence occupies residues 1-25; that stretch reads MGLEKSFILFPLLILVLGWVQSSLG. Residues Lys-32 and Arg-35 each contribute to the substrate site. Residue His-37 is the Proton acceptor of the active site. 4 disulfides stabilise this stretch: Cys-51-Cys-109, Cys-65-Cys-120, Cys-83-Cys-135, and Cys-90-Cys-97. Asn-59 carries an N-linked (GlcNAc...) asparagine glycan. 66 to 70 lines the substrate pocket; sequence KPVNT. The N-linked (GlcNAc...) asparagine glycan is linked to Asn-87. 2 residues coordinate substrate: Lys-91 and Arg-110. The active-site Proton donor is the His-144.

Belongs to the pancreatic ribonuclease family. Monomer. Interacts with and forms tight 1:1 complexes with RNH1. Dimerization of two such complexes may occur. Interaction with RNH1 inhibits this protein. Pancreas.

It localises to the secreted. It catalyses the reaction an [RNA] containing cytidine + H2O = an [RNA]-3'-cytidine-3'-phosphate + a 5'-hydroxy-ribonucleotide-3'-[RNA].. The catalysed reaction is an [RNA] containing uridine + H2O = an [RNA]-3'-uridine-3'-phosphate + a 5'-hydroxy-ribonucleotide-3'-[RNA].. Its function is as follows. Endonuclease that catalyzes the cleavage of RNA on the 3' side of pyrimidine nucleotides. Acts on single-stranded and double-stranded RNA. This is Ribonuclease pancreatic (RNASE1) from Abrothrix jelskii (Jelski's altiplano mouse).